The following is a 337-amino-acid chain: MTLNIGVIGTGAIGRDHIRRCSKVLQGSRIVAVNDINRDNAAKVVSDLKLDAKVYDNGHDLVKAADVQAVLVTSWGPSHEEFVLAAIAAGKPVFCEKPLAVTAQGCKNIVEAEAKHGKRLVQVGFMRPYDQGYRALKQVLTSGQIGEPLMLHCAHRNPTVGEAYTTDMAITDTLIHEIDVLRWLLDDDYVSVQVVFPRKSAKAFPHLKDPQIVLFETAKGTRIDVEIFVNCQYGYDIQCEVVGETGIAKLPEPSSVQMRSGAKLSTEILTDWKDRFIDAYDVELQGFINDVLAGKLTGPSAWDGYAAAVTADACVAAQLSGEIVPVTLPPRPAFYNK.

Belongs to the Gfo/Idh/MocA family. In terms of assembly, homotetramer.

The catalysed reaction is myo-inositol + NAD(+) = scyllo-inosose + NADH + H(+). In terms of biological role, involved in the oxidation of myo-inositol (MI) to 2-keto-myo-inositol (2KMI or 2-inosose). The polypeptide is Inositol 2-dehydrogenase (Serratia proteamaculans (strain 568)).